A 207-amino-acid polypeptide reads, in one-letter code: Ribosomal RNA small subunit methyltransferase G (207 aa).

S-adenosyl-L-methionine-binding positions include glycine 73, leucine 78, 124–125 (VE), and arginine 139.

This sequence belongs to the methyltransferase superfamily. RNA methyltransferase RsmG family.

It localises to the cytoplasm. It catalyses the reaction guanosine(527) in 16S rRNA + S-adenosyl-L-methionine = N(7)-methylguanosine(527) in 16S rRNA + S-adenosyl-L-homocysteine. Specifically methylates the N7 position of guanine in position 527 of 16S rRNA. This Cronobacter sakazakii (strain ATCC BAA-894) (Enterobacter sakazakii) protein is Ribosomal RNA small subunit methyltransferase G.